Here is a 232-residue protein sequence, read N- to C-terminus: Response regulator MprA (232 aa).

The 115-residue stretch at 4-118 (RILVVDDDRA…ELLARMRALL (115 aa)) folds into the Response regulatory domain. At Asp-48 the chain carries 4-aspartylphosphate. Positions 131-229 (SVAMTFSDLS…VRGVGYVLRE (99 aa)) form a DNA-binding region, ompR/PhoB-type.

Phosphorylated and dephosphorylated by MprB.

It is found in the cytoplasm. Functionally, member of the two-component regulatory system MprB/MprA which contributes to maintaining a balance among several systems involved in stress resistance and is required for establishment and maintenance of persistent infection in the host. Functions as a transcriptional regulator that recognizes a 19-bp nucleotide motif comprizing two loosely conserved 8-bp direct DNA-binding motif repeats separated by a 3-bp spacer region. This Mycobacterium ulcerans (strain Agy99) protein is Response regulator MprA (mprA).